The sequence spans 339 residues: Methionine import ATP-binding protein MetN 2 (339 aa).

The 240-residue stretch at 2–241 (ISFNNVSKVY…PKTKTTQNFV (240 aa)) folds into the ABC transporter domain. 38 to 45 (GFSGAGKS) provides a ligand contact to ATP.

The protein belongs to the ABC transporter superfamily. Methionine importer (TC 3.A.1.24) family. As to quaternary structure, the complex is composed of two ATP-binding proteins (MetN), two transmembrane proteins (MetI) and a solute-binding protein (MetQ).

It localises to the cell membrane. It carries out the reaction L-methionine(out) + ATP + H2O = L-methionine(in) + ADP + phosphate + H(+). It catalyses the reaction D-methionine(out) + ATP + H2O = D-methionine(in) + ADP + phosphate + H(+). Functionally, part of the ABC transporter complex MetNIQ involved in methionine import. Responsible for energy coupling to the transport system. The sequence is that of Methionine import ATP-binding protein MetN 2 from Bacillus cereus (strain ZK / E33L).